The chain runs to 767 residues: U3 small nucleolar RNA-associated protein 14 homolog A (767 aa).

The disordered stretch occupies residues 23–49; that stretch reads TSNYPLSASEDEGDSDGERKHQKLLEA. S29, S31, S37, S52, S77, and S81 each carry phosphoserine. A Glycyl lysine isopeptide (Lys-Gly) (interchain with G-Cter in SUMO2) cross-link involves residue K122. T205 carries the phosphothreonine modification. A coiled-coil region spans residues 317-346; the sequence is LEARQAMQEQLAKNKELTQKLQVVSESEEE. The disordered stretch occupies residues 338–554; the sequence is QVVSESEEEG…SKGKNKKEQM (217 aa). Positions 342–355 are enriched in acidic residues; the sequence is ESEEEGGADEEEAL. Residues 398–433 show a composition bias toward basic and acidic residues; that stretch reads AAHEFPENEENDKPVAEEDELLKELEKRRSLRKRSE. At R431 the chain carries Citrulline. Residue K447 forms a Glycyl lysine isopeptide (Lys-Gly) (interchain with G-Cter in SUMO2) linkage. Phosphoserine is present on S451. Residues 486–498 show a composition bias toward acidic residues; sequence VWEEEPAPEEDEP. The segment covering 503–538 has biased composition (basic and acidic residues); the sequence is RPERMRTLEELEELGKEDSLPNKERPRPSVEGEQVR. K518 participates in a covalent cross-link: Glycyl lysine isopeptide (Lys-Gly) (interchain with G-Cter in SUMO2). R586 is subject to Citrulline. The interval 730 to 767 is disordered; that stretch reads TAEDVDCRSSPRSDVPVMQSNPKQHSKHQKQRKKSSIG. Residues 753–767 are compositionally biased toward basic residues; that stretch reads QHSKHQKQRKKSSIG.

The protein belongs to the UTP14 family. In terms of assembly, interacts with DHX37. In terms of processing, citrullinated by PADI4. Ubiquitously expressed.

It is found in the nucleus. It localises to the nucleolus. Functionally, may be required for ribosome biogenesis. This is U3 small nucleolar RNA-associated protein 14 homolog A (Utp14a) from Mus musculus (Mouse).